A 765-amino-acid chain; its full sequence is Putative ankyrin repeat protein L371 (765 aa).

9 ANK repeats span residues 60 to 89 (NGNYMIFFAIIMNSSTILKKLIKYGARLDV), 93 to 122 (EGNSVMYYPIKFGYYEIIDVLIDYDSKIIG), 132 to 161 (KGSVPLFYAIKYRNKYALQQLLSKDANANY), 165 to 194 (DNVNALHMAVLKKDISMVKLVIKHIKNLNA), 198 to 227 (QGSTALHYACNFQLYDITKLLLDNGADQNI), 232 to 261 (LDFYPIFYSVIQNDINISKLLVDYGANPNH), 265 to 295 (EGNTILHYCVIYNHMEIFDYIMNNYVIRCRS), 322 to 353 (DGLTVVHLMLYDYKEEYDNFLKKLIPYCNLNY), and 357 to 395 (TGNTILHLIAENNIWNKFDNLLNVKKLNIFIRNNNGKTV).

The protein is Putative ankyrin repeat protein L371 of Acanthamoeba polyphaga mimivirus (APMV).